The chain runs to 221 residues: UPF0319 protein CGSHiEE_03630 (221 aa).

The N-terminal stretch at Met1–Ala21 is a signal peptide.

Belongs to the UPF0319 family.

The sequence is that of UPF0319 protein CGSHiEE_03630 from Haemophilus influenzae (strain PittEE).